A 685-amino-acid chain; its full sequence is MEETIENVEVPSSNVSKQNDDGLDMKTLFVRSIPQDVTDEQLADFFSNFAPIKHAVVVKDTNKRSRGFGFVSFAVEDDTKEALAKARKTKFNGHILRVDIAKRRDRSKKTSEVVEKSTPESSEKITGQNNEDEDDADGEDSMLKGKPKLIIRNMPWSCRDPVKLKKIFGRYGTVVEATIPRKRDGKLCGFAFVTMKKISNCRIALENTKDLKIDGRKVAVDFAVQKNRWEDYKKAQPEMNDKDDNESGNEDAEENHDDEEDENEEEDRQVDQASKNKESKRKAQNKREDFSVFVRNVPYDATEESLAPHFSKFGSVKYALPVIDKSTGLAKGTAFVAFKDQYTYNECIKNAPAAGSTSLLIGDDVMPEYVYEGRVLSITPTLVREDAGRMAEKNAAKRKEALGKAPGEKDRRNLYLLNEGRVVEGSKMADLLTNTDMEIREKSYKLRVEQLKKNPSLHLSMTRLAIRNLPRAMNDKALKALARKAVVEFATEVKNKERHPLSKEEIIRSTKEKYKFMGPDEIEAQKKKDKKSGVVKQAKVIMEVKGSTAGRSRGYGFVEFRDHKNALMGLRWLNCHAVTSDEILEGLNDDEKKQVDNDLGKGRRLCVEFAIENSNVVKRRREQLKQARTKRTRPDNEDTGDVGESENKKPKKEEATTPTNPDDKKMGDDIKRIIGFKRKRKHAKK.

A disordered region spans residues 1-21; that stretch reads MEETIENVEVPSSNVSKQNDD. The RRM 1 domain maps to 26 to 103; sequence KTLFVRSIPQ…HILRVDIAKR (78 aa). The segment covering 106 to 123 has biased composition (basic and acidic residues); it reads RSKKTSEVVEKSTPESSE. Positions 106–142 are disordered; the sequence is RSKKTSEVVEKSTPESSEKITGQNNEDEDDADGEDSM. Over residues 130 to 140 the composition is skewed to acidic residues; it reads NEDEDDADGED. The region spanning 147–225 is the RRM 2 domain; that stretch reads PKLIIRNMPW…RKVAVDFAVQ (79 aa). Positions 231-242 are enriched in basic and acidic residues; it reads DYKKAQPEMNDK. Residues 231 to 285 are disordered; the sequence is DYKKAQPEMNDKDDNESGNEDAEENHDDEEDENEEEDRQVDQASKNKESKRKAQN. The span at 243-268 shows a compositional bias: acidic residues; it reads DDNESGNEDAEENHDDEEDENEEEDR. The residue at position 247 (serine 247) is a Phosphoserine. 2 consecutive RRM domains span residues 290–383 and 462–612; these read FSVF…PTLV and TRLA…FAIE. Threonine 379 carries the phosphothreonine modification. The segment covering 622–631 has biased composition (basic residues); it reads EQLKQARTKR. The disordered stretch occupies residues 622 to 685; sequence EQLKQARTKR…FKRKRKHAKK (64 aa). A compositionally biased stretch (basic and acidic residues) spans 645–672; that stretch reads SENKKPKKEEATTPTNPDDKKMGDDIKR. Basic residues predominate over residues 674–685; it reads IGFKRKRKHAKK.

In terms of assembly, interacts with NOP1.

Its subcellular location is the nucleus. It localises to the nucleolus. Required for 60S ribosomal subunit synthesis. Probably involved in the processing of 27S rRNA to produce mature 25S rRNA. The chain is Nucleolar protein 4 (NOP4) from Saccharomyces cerevisiae (strain ATCC 204508 / S288c) (Baker's yeast).